Consider the following 282-residue polypeptide: Pantothenate synthetase (282 aa).

30–37 (MGYLHEGH) is an ATP binding site. Catalysis depends on H37, which acts as the Proton donor. Q61 contacts (R)-pantoate. Q61 is a beta-alanine binding site. Residue 147–150 (GQKD) participates in ATP binding. Q153 contributes to the (R)-pantoate binding site. Residues V176 and 184–187 (MSSR) contribute to the ATP site.

Belongs to the pantothenate synthetase family. Homodimer.

The protein resides in the cytoplasm. The enzyme catalyses (R)-pantoate + beta-alanine + ATP = (R)-pantothenate + AMP + diphosphate + H(+). Its pathway is cofactor biosynthesis; (R)-pantothenate biosynthesis; (R)-pantothenate from (R)-pantoate and beta-alanine: step 1/1. Functionally, catalyzes the condensation of pantoate with beta-alanine in an ATP-dependent reaction via a pantoyl-adenylate intermediate. This is Pantothenate synthetase from Caldicellulosiruptor bescii (strain ATCC BAA-1888 / DSM 6725 / KCTC 15123 / Z-1320) (Anaerocellum thermophilum).